We begin with the raw amino-acid sequence, 382 residues long: Anhydro-N-acetylmuramic acid kinase (382 aa).

22–29 (GTSMDGVD) lines the ATP pocket.

Belongs to the anhydro-N-acetylmuramic acid kinase family.

The catalysed reaction is 1,6-anhydro-N-acetyl-beta-muramate + ATP + H2O = N-acetyl-D-muramate 6-phosphate + ADP + H(+). It functions in the pathway amino-sugar metabolism; 1,6-anhydro-N-acetylmuramate degradation. The protein operates within cell wall biogenesis; peptidoglycan recycling. Its function is as follows. Catalyzes the specific phosphorylation of 1,6-anhydro-N-acetylmuramic acid (anhMurNAc) with the simultaneous cleavage of the 1,6-anhydro ring, generating MurNAc-6-P. Is required for the utilization of anhMurNAc either imported from the medium or derived from its own cell wall murein, and thus plays a role in cell wall recycling. The protein is Anhydro-N-acetylmuramic acid kinase of Burkholderia cenocepacia (strain ATCC BAA-245 / DSM 16553 / LMG 16656 / NCTC 13227 / J2315 / CF5610) (Burkholderia cepacia (strain J2315)).